A 402-amino-acid polypeptide reads, in one-letter code: Glutamyl-tRNA reductase (402 aa).

Substrate is bound by residues 48-51 (TCNR), S91, 96-98 (EDQ), and Q102. C49 acts as the Nucleophile in catalysis. 171 to 176 (GAGKMG) contributes to the NADP(+) binding site.

This sequence belongs to the glutamyl-tRNA reductase family. As to quaternary structure, homodimer.

It carries out the reaction (S)-4-amino-5-oxopentanoate + tRNA(Glu) + NADP(+) = L-glutamyl-tRNA(Glu) + NADPH + H(+). It participates in porphyrin-containing compound metabolism; protoporphyrin-IX biosynthesis; 5-aminolevulinate from L-glutamyl-tRNA(Glu): step 1/2. Its function is as follows. Catalyzes the NADPH-dependent reduction of glutamyl-tRNA(Glu) to glutamate 1-semialdehyde (GSA). This chain is Glutamyl-tRNA reductase, found in Methanothermobacter thermautotrophicus (strain ATCC 29096 / DSM 1053 / JCM 10044 / NBRC 100330 / Delta H) (Methanobacterium thermoautotrophicum).